The primary structure comprises 129 residues: Large ribosomal subunit protein bL17 (129 aa).

Belongs to the bacterial ribosomal protein bL17 family. Part of the 50S ribosomal subunit. Contacts protein L32.

This is Large ribosomal subunit protein bL17 from Yersinia pseudotuberculosis serotype O:1b (strain IP 31758).